The sequence spans 105 residues: Thioredoxin (105 aa).

A Thioredoxin domain is found at 1-105; the sequence is MVNNVTDSSF…SLLDWINKSI (105 aa). A disulfide bridge links Cys-30 with Cys-33.

The protein belongs to the thioredoxin family.

Its function is as follows. Component of the thioredoxin-thioredoxin reductase system. Participates in various redox reactions through the reversible oxidation of its active center dithiol to a disulfide and catalyzes dithiol-disulfide exchange reactions. In Rickettsia prowazekii (strain Madrid E), this protein is Thioredoxin (trxA).